A 61-amino-acid polypeptide reads, in one-letter code: Large ribosomal subunit protein uL30 (61 aa).

This sequence belongs to the universal ribosomal protein uL30 family. As to quaternary structure, part of the 50S ribosomal subunit.

This is Large ribosomal subunit protein uL30 from Chlorobaculum parvum (strain DSM 263 / NCIMB 8327) (Chlorobium vibrioforme subsp. thiosulfatophilum).